Consider the following 134-residue polypeptide: Profilin-1 (134 aa).

The cysteines at positions 13 and 118 are disulfide-linked. The short motif at 84–100 (AVIRGKKGSGGITIKKT) is the Involved in PIP2 interaction element. T114 is modified (phosphothreonine).

The protein belongs to the profilin family. In terms of assembly, occurs in many kinds of cells as a complex with monomeric actin in a 1:1 ratio. In terms of processing, phosphorylated by MAP kinases.

The protein localises to the cytoplasm. The protein resides in the cytoskeleton. In terms of biological role, binds to actin and affects the structure of the cytoskeleton. At high concentrations, profilin prevents the polymerization of actin, whereas it enhances it at low concentrations. By binding to PIP2, it inhibits the formation of IP3 and DG. This chain is Profilin-1 (PRO1), found in Olea europaea (Common olive).